The following is a 750-amino-acid chain: Ribosomal RNA large subunit methyltransferase K/L (750 aa).

The THUMP domain occupies 46–157; that stretch reads TAYRLCLWSR…RGEAILSLDL (112 aa).

The protein belongs to the methyltransferase superfamily. RlmKL family.

Its subcellular location is the cytoplasm. It catalyses the reaction guanosine(2445) in 23S rRNA + S-adenosyl-L-methionine = N(2)-methylguanosine(2445) in 23S rRNA + S-adenosyl-L-homocysteine + H(+). It carries out the reaction guanosine(2069) in 23S rRNA + S-adenosyl-L-methionine = N(2)-methylguanosine(2069) in 23S rRNA + S-adenosyl-L-homocysteine + H(+). Its function is as follows. Specifically methylates the guanine in position 2445 (m2G2445) and the guanine in position 2069 (m7G2069) of 23S rRNA. This Pseudomonas savastanoi pv. phaseolicola (strain 1448A / Race 6) (Pseudomonas syringae pv. phaseolicola (strain 1448A / Race 6)) protein is Ribosomal RNA large subunit methyltransferase K/L.